The chain runs to 242 residues: TGACG-sequence-specific DNA-binding protein TGA-1B (242 aa).

The segment at 1–125 (EFCDFSGNQA…HSSPNFENNS (125 aa)) is disordered. Residues 18–45 (DTSSPELRQSSSGSDVLNATSSTSSHQV) are compositionally biased toward polar residues. Basic and acidic residues predominate over residues 66–79 (EGSRESANDNKGLG). Residues 88-125 (SPESQGSGNYGSNVSEGLNYPSDSNKSVHSSPNFENNS) are compositionally biased toward polar residues. A bZIP domain is found at 183–242 (DEKKRARLVRNRESAQLSRQRKKHYVEELEDKVRIMHSTIQDLNAKVAYIIAENATLKTQ). The interval 185-216 (KKRARLVRNRESAQLSRQRKKHYVEELEDKVR) is basic motif. The segment at 225–239 (LNAKVAYIIAENATL) is leucine-zipper.

Belongs to the bZIP family.

It localises to the nucleus. In terms of biological role, binds specifically to the DNA sequence 5'-TGACG-3'. The sequence is that of TGACG-sequence-specific DNA-binding protein TGA-1B (TGA1B) from Nicotiana tabacum (Common tobacco).